The primary structure comprises 337 residues: tRNA-cytidine(32) 2-sulfurtransferase (337 aa).

The PP-loop motif motif lies at 71–76 (SGGKDS). Residues Cys-146, Cys-149, and Cys-237 each contribute to the [4Fe-4S] cluster site.

Belongs to the TtcA family. Homodimer. Mg(2+) is required as a cofactor. It depends on [4Fe-4S] cluster as a cofactor.

Its subcellular location is the cytoplasm. The catalysed reaction is cytidine(32) in tRNA + S-sulfanyl-L-cysteinyl-[cysteine desulfurase] + AH2 + ATP = 2-thiocytidine(32) in tRNA + L-cysteinyl-[cysteine desulfurase] + A + AMP + diphosphate + H(+). It participates in tRNA modification. Its function is as follows. Catalyzes the ATP-dependent 2-thiolation of cytidine in position 32 of tRNA, to form 2-thiocytidine (s(2)C32). The sulfur atoms are provided by the cysteine/cysteine desulfurase (IscS) system. The polypeptide is tRNA-cytidine(32) 2-sulfurtransferase (Burkholderia vietnamiensis (strain G4 / LMG 22486) (Burkholderia cepacia (strain R1808))).